We begin with the raw amino-acid sequence, 752 residues long: Ribonucleases P/MRP protein subunit popl-1 (752 aa).

Residues 638 to 663 (KTTKRKRVNRKKRESKKRRKIEQEKR) are disordered. Over residues 640–657 (TKRKRVNRKKRESKKRRK) the composition is skewed to basic residues.

As to quaternary structure, component of nuclear RNase P and RNase MRP ribonucleoproteins. Several subunits of RNase P are also part of the RNase MRP complex.

The protein resides in the nucleus. The protein localises to the nucleolus. The enzyme catalyses Endonucleolytic cleavage of RNA, removing 5'-extranucleotides from tRNA precursor.. Component of ribonuclease P, a ribonucleoprotein complex that generates mature tRNA molecules by cleaving their 5'-ends. Also a component of the MRP ribonuclease complex, which cleaves pre-rRNA sequences. This Caenorhabditis elegans protein is Ribonucleases P/MRP protein subunit popl-1.